Here is a 99-residue protein sequence, read N- to C-terminus: Small ribosomal subunit protein bS20 (99 aa).

Belongs to the bacterial ribosomal protein bS20 family.

Its function is as follows. Binds directly to 16S ribosomal RNA. This is Small ribosomal subunit protein bS20 from Thermomicrobium roseum (strain ATCC 27502 / DSM 5159 / P-2).